A 370-amino-acid polypeptide reads, in one-letter code: GTPase Obg (370 aa).

The region spanning 1–159 (MKFIDEARIE…RMLKLELKVL (159 aa)) is the Obg domain. The disordered stretch occupies residues 128 to 147 (LHFKSSTNRAPRQKTDGKPG). Positions 160 to 334 (ADVGLLGMPN…LCYAIYDYLS (175 aa)) constitute an OBG-type G domain. Residues 166 to 173 (GMPNAGKS), 191 to 195 (FTTLA), 213 to 216 (DIPG), 284 to 287 (NKLD), and 315 to 317 (SAL) contribute to the GTP site. Mg(2+) is bound by residues Ser-173 and Thr-193.

Belongs to the TRAFAC class OBG-HflX-like GTPase superfamily. OBG GTPase family. As to quaternary structure, monomer. Mg(2+) serves as cofactor.

Its subcellular location is the cytoplasm. Its function is as follows. An essential GTPase which binds GTP, GDP and possibly (p)ppGpp with moderate affinity, with high nucleotide exchange rates and a fairly low GTP hydrolysis rate. Plays a role in control of the cell cycle, stress response, ribosome biogenesis and in those bacteria that undergo differentiation, in morphogenesis control. This Burkholderia orbicola (strain MC0-3) protein is GTPase Obg.